The following is a 142-amino-acid chain: Hemoglobin subunit alpha (142 aa).

Position 1 is an N-acetylserine (Ser1). The region spanning 1-142 (SLSDKDKAAV…VALALAERYR (142 aa)) is the Globin domain. His59 provides a ligand contact to O2. His88 contributes to the heme b binding site.

Belongs to the globin family. As to quaternary structure, heterotetramer of two alpha chains and two beta chains. In terms of tissue distribution, red blood cells.

Its function is as follows. Involved in oxygen transport from gills to the various peripheral tissues. The chain is Hemoglobin subunit alpha (hba) from Gymnodraco acuticeps (Antarctic dragonfish).